The primary structure comprises 243 residues: MEQKILTTIHQQILEAKKNGQKLLAILLDPDKIVWENLDHLLLKINQSPATHIFVGGSIVESTIIEDLIAQLKQKTRLPVVIFPGDPSQISPKADAILFLSLLSGRNPDYLIEYQVQAAPILKKTNLEVISTGYILIESGNETAVARVSKTEPLNRENFDLALATAQAGEMLGSKLIYLEAGSGAKKPVPLEMISVISQNVEIPIIVGGGIVDLHGIKKAYNAGADLVVIGTAFENDSHFFDS.

D29 and S58 together coordinate Mg(2+). Sn-glycerol 1-phosphate is bound by residues 178 to 184 (YLEAGSG), 209 to 210 (GG), and 231 to 232 (GT).

It belongs to the GGGP/HepGP synthase family. Group II subfamily. In terms of assembly, homodimer. Requires Mg(2+) as cofactor.

The enzyme catalyses sn-glycerol 1-phosphate + (2E,6E,10E)-geranylgeranyl diphosphate = sn-3-O-(geranylgeranyl)glycerol 1-phosphate + diphosphate. Its function is as follows. Prenyltransferase that catalyzes the transfer of the geranylgeranyl moiety of geranylgeranyl diphosphate (GGPP) to the C3 hydroxyl of sn-glycerol-1-phosphate (G1P). The chain is Geranylgeranylglyceryl phosphate synthase from Flavobacterium johnsoniae (strain ATCC 17061 / DSM 2064 / JCM 8514 / BCRC 14874 / CCUG 350202 / NBRC 14942 / NCIMB 11054 / UW101) (Cytophaga johnsonae).